The chain runs to 224 residues: Biosynthetic peptidoglycan transglycosylase (224 aa).

A helical transmembrane segment spans residues 12–32 (ILVVLAILPVFLLLVYSLPFV).

The protein belongs to the glycosyltransferase 51 family.

The protein resides in the cell inner membrane. It carries out the reaction [GlcNAc-(1-&gt;4)-Mur2Ac(oyl-L-Ala-gamma-D-Glu-L-Lys-D-Ala-D-Ala)](n)-di-trans,octa-cis-undecaprenyl diphosphate + beta-D-GlcNAc-(1-&gt;4)-Mur2Ac(oyl-L-Ala-gamma-D-Glu-L-Lys-D-Ala-D-Ala)-di-trans,octa-cis-undecaprenyl diphosphate = [GlcNAc-(1-&gt;4)-Mur2Ac(oyl-L-Ala-gamma-D-Glu-L-Lys-D-Ala-D-Ala)](n+1)-di-trans,octa-cis-undecaprenyl diphosphate + di-trans,octa-cis-undecaprenyl diphosphate + H(+). The protein operates within cell wall biogenesis; peptidoglycan biosynthesis. Functionally, peptidoglycan polymerase that catalyzes glycan chain elongation from lipid-linked precursors. The polypeptide is Biosynthetic peptidoglycan transglycosylase (Brucella melitensis biotype 1 (strain ATCC 23456 / CCUG 17765 / NCTC 10094 / 16M)).